The chain runs to 131 residues: Profilin-2 (131 aa).

Cysteines 13 and 115 form a disulfide. The short motif at 81 to 97 (AVIRGKKGPGGVTVKKT) is the Involved in PIP2 interaction element. The residue at position 111 (Thr111) is a Phosphothreonine.

This sequence belongs to the profilin family. Multimer. Occurs in many kinds of cells as a complex with monomeric actin in a 1:1 ratio. Post-translationally, phosphorylated by MAP kinases.

The protein resides in the cytoplasm. It is found in the cytoskeleton. In terms of biological role, binds to actin and affects the structure of the cytoskeleton. At high concentrations, profilin prevents the polymerization of actin, whereas it enhances it at low concentrations. By binding to PIP2, it inhibits the formation of IP3 and DG. In Hevea brasiliensis (Para rubber tree), this protein is Profilin-2.